A 341-amino-acid chain; its full sequence is Protein pelota homolog (341 aa).

Belongs to the eukaryotic release factor 1 family. Pelota subfamily. Monomer. A divalent metal cation serves as cofactor.

It localises to the cytoplasm. May function in recognizing stalled ribosomes, interact with stem-loop structures in stalled mRNA molecules, and effect endonucleolytic cleavage of the mRNA. May play a role in the release non-functional ribosomes and degradation of damaged mRNAs. Has endoribonuclease activity. The chain is Protein pelota homolog from Methanoculleus marisnigri (strain ATCC 35101 / DSM 1498 / JR1).